Consider the following 389-residue polypeptide: 8-amino-7-oxononanoate synthase 2 (389 aa).

Residue Arg21 participates in substrate binding. 108–109 contributes to the pyridoxal 5'-phosphate binding site; that stretch reads GY. Substrate is bound at residue His133. Pyridoxal 5'-phosphate is bound by residues Ser180, 205–208, and 234–237; these read DDAH and TLSK. N6-(pyridoxal phosphate)lysine is present on Lys237. Residue Thr351 participates in substrate binding.

The protein belongs to the class-II pyridoxal-phosphate-dependent aminotransferase family. BioF subfamily. Homodimer. Requires pyridoxal 5'-phosphate as cofactor.

The catalysed reaction is 6-carboxyhexanoyl-[ACP] + L-alanine + H(+) = (8S)-8-amino-7-oxononanoate + holo-[ACP] + CO2. Its pathway is cofactor biosynthesis; biotin biosynthesis. Its function is as follows. Catalyzes the decarboxylative condensation of pimeloyl-[acyl-carrier protein] and L-alanine to produce 8-amino-7-oxononanoate (AON), [acyl-carrier protein], and carbon dioxide. The chain is 8-amino-7-oxononanoate synthase 2 (bioF) from Bacillus subtilis (strain 168).